The chain runs to 179 residues: Large ribosomal subunit protein uL5 (179 aa).

It belongs to the universal ribosomal protein uL5 family. Part of the 50S ribosomal subunit; part of the 5S rRNA/L5/L18/L25 subcomplex. Contacts the 5S rRNA and the P site tRNA. Forms a bridge to the 30S subunit in the 70S ribosome.

This is one of the proteins that bind and probably mediate the attachment of the 5S RNA into the large ribosomal subunit, where it forms part of the central protuberance. In the 70S ribosome it contacts protein S13 of the 30S subunit (bridge B1b), connecting the 2 subunits; this bridge is implicated in subunit movement. Contacts the P site tRNA; the 5S rRNA and some of its associated proteins might help stabilize positioning of ribosome-bound tRNAs. This is Large ribosomal subunit protein uL5 from Herpetosiphon aurantiacus (strain ATCC 23779 / DSM 785 / 114-95).